The following is a 207-amino-acid chain: Interleukin-6 (207 aa).

The N-terminal stretch at 1–20 is a signal peptide; the sequence is MNSLSTSAFSLGLLLVMATA. Cysteine 67 and cysteine 73 form a disulfide bridge. Serine 76 is modified (phosphoserine). An intrachain disulfide couples cysteine 96 to cysteine 106.

Belongs to the IL-6 superfamily. In terms of assembly, component of a hexamer of two molecules each of IL6, IL6R and IL6ST; first binds to IL6R to associate with the signaling subunit IL6ST. Interacts with IL6R (via the N-terminal ectodomain); this interaction may be affected by IL6R-binding with SORL1, hence decreasing IL6 cis signaling. Interacts with SORL1 (via the N-terminal ectodomain); this interaction leads to IL6 internalization and lysosomal degradation. May form a trimeric complex with the soluble SORL1 ectodomain and soluble IL6R receptor; this interaction might stabilize circulating IL6, hence promoting IL6 trans signaling.

It localises to the secreted. Its function is as follows. Cytokine with a wide variety of biological functions in immunity, tissue regeneration, and metabolism. Binds to IL6R, then the complex associates to the signaling subunit IL6ST/gp130 to trigger the intracellular IL6-signaling pathway. The interaction with the membrane-bound IL6R and IL6ST stimulates 'classic signaling', whereas the binding of IL6 and soluble IL6R to IL6ST stimulates 'trans-signaling'. Alternatively, 'cluster signaling' occurs when membrane-bound IL6:IL6R complexes on transmitter cells activate IL6ST receptors on neighboring receiver cells. Functionally, IL6 is a potent inducer of the acute phase response. Rapid production of IL6 contributes to host defense during infection and tissue injury, but excessive IL6 synthesis is involved in disease pathology. In the innate immune response, is synthesized by myeloid cells, such as macrophages and dendritic cells, upon recognition of pathogens through toll-like receptors (TLRs) at the site of infection or tissue injury. In the adaptive immune response, is required for the differentiation of B cells into immunoglobulin-secreting cells. Plays a major role in the differentiation of CD4(+) T cell subsets. Essential factor for the development of T follicular helper (Tfh) cells that are required for the induction of germinal-center formation. Required to drive naive CD4(+) T cells to the Th17 lineage. Also required for proliferation of myeloma cells and the survival of plasmablast cells. In terms of biological role, acts as an essential factor in bone homeostasis and on vessels directly or indirectly by induction of VEGF, resulting in increased angiogenesis activity and vascular permeability. Induces, through 'trans-signaling' and synergistically with IL1B and TNF, the production of VEGF. Involved in metabolic controls, is discharged into the bloodstream after muscle contraction increasing lipolysis and improving insulin resistance. 'Trans-signaling' in central nervous system also regulates energy and glucose homeostasis. Mediates, through GLP-1, crosstalk between insulin-sensitive tissues, intestinal L cells and pancreatic islets to adapt to changes in insulin demand. Also acts as a myokine. Plays a protective role during liver injury, being required for maintenance of tissue regeneration. Also has a pivotal role in iron metabolism by regulating HAMP/hepcidin expression upon inflammation or bacterial infection. Through activation of IL6ST-YAP-NOTCH pathway, induces inflammation-induced epithelial regeneration. The protein is Interleukin-6 (IL6) of Canis lupus familiaris (Dog).